A 152-amino-acid chain; its full sequence is Xanthine-guanine phosphoribosyltransferase (152 aa).

Residues arginine 37 to glycine 38, arginine 69, and aspartate 88 to threonine 96 contribute to the 5-phospho-alpha-D-ribose 1-diphosphate site. Residue arginine 69 coordinates GMP. Aspartate 89 is a Mg(2+) binding site. The guanine site is built by aspartate 92 and isoleucine 135. Aspartate 92 and isoleucine 135 together coordinate xanthine. Residues aspartate 92 to threonine 96 and tryptophan 134 to isoleucine 135 each bind GMP.

Belongs to the purine/pyrimidine phosphoribosyltransferase family. XGPT subfamily. In terms of assembly, homotetramer. The cofactor is Mg(2+).

It localises to the cell inner membrane. It carries out the reaction GMP + diphosphate = guanine + 5-phospho-alpha-D-ribose 1-diphosphate. It catalyses the reaction XMP + diphosphate = xanthine + 5-phospho-alpha-D-ribose 1-diphosphate. The catalysed reaction is IMP + diphosphate = hypoxanthine + 5-phospho-alpha-D-ribose 1-diphosphate. Its pathway is purine metabolism; GMP biosynthesis via salvage pathway; GMP from guanine: step 1/1. The protein operates within purine metabolism; XMP biosynthesis via salvage pathway; XMP from xanthine: step 1/1. In terms of biological role, purine salvage pathway enzyme that catalyzes the transfer of the ribosyl-5-phosphate group from 5-phospho-alpha-D-ribose 1-diphosphate (PRPP) to the N9 position of the 6-oxopurines guanine and xanthine to form the corresponding ribonucleotides GMP (guanosine 5'-monophosphate) and XMP (xanthosine 5'-monophosphate), with the release of PPi. To a lesser extent, also acts on hypoxanthine. In Enterobacter sp. (strain 638), this protein is Xanthine-guanine phosphoribosyltransferase.